Consider the following 593-residue polypeptide: Copine-5 (593 aa).

Residues 2-134 (EQPEDMASLS…SSGSRLEKPL (133 aa)) form the C2 1 domain. Serine 19 is modified (phosphoserine). Residues aspartate 38, aspartate 44, aspartate 98, aspartate 100, serine 103, lysine 108, and aspartate 110 each coordinate Ca(2+). Phosphoserine is present on serine 103. Phosphoserine is present on serine 140. Residues 161-284 (KCGTIILSAE…ARGQSQFNIY (124 aa)) form the C2 2 domain. Positions 192, 198, 254, 256, and 262 each coordinate Ca(2+). Residues 328-554 (NFTVAIDFTA…DVLAEIPDQL (227 aa)) form the VWFA domain. The tract at residues 562–593 (GIRPRPPPAAPAQSPPQSPAHSPPGSPVHTHI) is disordered. Pro residues predominate over residues 565–587 (PRPPPAAPAQSPPQSPAHSPPGS).

The protein belongs to the copine family. It depends on Ca(2+) as a cofactor. As to expression, expressed in the cerebra and cerebellum of newborn brain. Expressed in the eye, lung and muscles but weakly expressed in the adult brain (at protein level).

The protein resides in the perikaryon. The protein localises to the cell projection. Functionally, probable calcium-dependent phospholipid-binding protein that may play a role in calcium-mediated intracellular processes. Plays a role in dendrite formation by melanocytes. The polypeptide is Copine-5 (Mus musculus (Mouse)).